Reading from the N-terminus, the 410-residue chain is LL-diaminopimelate aminotransferase (410 aa).

Substrate contacts are provided by Y15 and G42. Residues Y72, 108-109 (SK), Y132, N187, Y218, and 246-248 (SFS) contribute to the pyridoxal 5'-phosphate site. K109, Y132, and N187 together coordinate substrate. The residue at position 249 (K249) is an N6-(pyridoxal phosphate)lysine. Pyridoxal 5'-phosphate is bound by residues R257 and N292. Substrate contacts are provided by N292 and R388.

It belongs to the class-I pyridoxal-phosphate-dependent aminotransferase family. LL-diaminopimelate aminotransferase subfamily. In terms of assembly, homodimer. It depends on pyridoxal 5'-phosphate as a cofactor.

It catalyses the reaction (2S,6S)-2,6-diaminopimelate + 2-oxoglutarate = (S)-2,3,4,5-tetrahydrodipicolinate + L-glutamate + H2O + H(+). Its pathway is amino-acid biosynthesis; L-lysine biosynthesis via DAP pathway; LL-2,6-diaminopimelate from (S)-tetrahydrodipicolinate (aminotransferase route): step 1/1. Involved in the synthesis of meso-diaminopimelate (m-DAP or DL-DAP), required for both lysine and peptidoglycan biosynthesis. Catalyzes the direct conversion of tetrahydrodipicolinate to LL-diaminopimelate. This chain is LL-diaminopimelate aminotransferase, found in Syntrophotalea carbinolica (strain DSM 2380 / NBRC 103641 / GraBd1) (Pelobacter carbinolicus).